The primary structure comprises 256 residues: GTP cyclohydrolase FolE2 (256 aa).

Belongs to the GTP cyclohydrolase IV family.

The enzyme catalyses GTP + H2O = 7,8-dihydroneopterin 3'-triphosphate + formate + H(+). The protein operates within cofactor biosynthesis; 7,8-dihydroneopterin triphosphate biosynthesis; 7,8-dihydroneopterin triphosphate from GTP: step 1/1. Functionally, converts GTP to 7,8-dihydroneopterin triphosphate. In Caldicellulosiruptor saccharolyticus (strain ATCC 43494 / DSM 8903 / Tp8T 6331), this protein is GTP cyclohydrolase FolE2.